Here is a 423-residue protein sequence, read N- to C-terminus: MLQLIKGFKDILPGEADRWRRIETLAAVTFGAFGFSEIRPPVMERTELFKRSIGEDTDIVEKEMYTFEDRGGDLVTLRPEATASVVRAYIQHKLYADTPVAKLYTIGPMFRRERPQKGRYRQFHQINAEAFGVAAPYMDAQLIFMLMILFSALGLKDTRVHINSLGCAQCRPAFKQRLLSFLEGRKADLCEDCTRRIDRNPLRVLDCKVDRCRHVSAEAPQITDFLCPGCAAHFDEVTGLLTDLGVGFDIDKRLVRGLDYYTRTTFEVQTDRLGAQSAIAGGGRYDDLVKLLGGPDQPAVGFAVGLERLVELVAMEETVSDVAHLRLFIAALGERARRRAFGWMCELNRRGFDVEMSLEERGLKSQMKTADKWNASHVLIVGDAEMETGSLILRNMKTKAQQEIPLGDVPGALITMMDNRQEN.

Belongs to the class-II aminoacyl-tRNA synthetase family. As to quaternary structure, homodimer.

The protein localises to the cytoplasm. The enzyme catalyses tRNA(His) + L-histidine + ATP = L-histidyl-tRNA(His) + AMP + diphosphate + H(+). In Desulfosudis oleivorans (strain DSM 6200 / JCM 39069 / Hxd3) (Desulfococcus oleovorans), this protein is Histidine--tRNA ligase.